A 392-amino-acid chain; its full sequence is Formate-dependent phosphoribosylglycinamide formyltransferase (392 aa).

Residues 15–16 (EL) and glutamate 75 each bind N(1)-(5-phospho-beta-D-ribosyl)glycinamide. ATP-binding positions include arginine 107, lysine 148, 153 to 158 (SSGKGQ), 188 to 191 (EEFL), and glutamate 196. The 191-residue stretch at 112-302 (DLASGELGLH…EFELHLRAVL (191 aa)) folds into the ATP-grasp domain. Mg(2+) contacts are provided by glutamate 261 and glutamate 273. Residues aspartate 280, lysine 350, and 357 to 358 (RR) contribute to the N(1)-(5-phospho-beta-D-ribosyl)glycinamide site.

This sequence belongs to the PurK/PurT family. As to quaternary structure, homodimer.

It catalyses the reaction N(1)-(5-phospho-beta-D-ribosyl)glycinamide + formate + ATP = N(2)-formyl-N(1)-(5-phospho-beta-D-ribosyl)glycinamide + ADP + phosphate + H(+). The protein operates within purine metabolism; IMP biosynthesis via de novo pathway; N(2)-formyl-N(1)-(5-phospho-D-ribosyl)glycinamide from N(1)-(5-phospho-D-ribosyl)glycinamide (formate route): step 1/1. Functionally, involved in the de novo purine biosynthesis. Catalyzes the transfer of formate to 5-phospho-ribosyl-glycinamide (GAR), producing 5-phospho-ribosyl-N-formylglycinamide (FGAR). Formate is provided by PurU via hydrolysis of 10-formyl-tetrahydrofolate. The chain is Formate-dependent phosphoribosylglycinamide formyltransferase from Synechococcus sp. (strain CC9902).